Reading from the N-terminus, the 236-residue chain is Apoptosis regulator Bcl-2 (236 aa).

Residues 10–30 carry the BH4 motif; that stretch reads DNREIVMKYIHYKLSQRGYEW. The residue at position 69 (T69) is a Phosphothreonine; by MAPK8. S70 is modified (phosphoserine; by MAPK8 and PKC). Residue S84 is modified to Phosphoserine; by MAPK8. The BH3 motif lies at 90 to 104; it reads VHLTLRRAGDDFSRR. The BH1 motif lies at 133–152; sequence ELFRDGVNWGRIVAFFEFGG. The BH2 motif lies at 184-199; sequence TWIQDNGGWDAFVELY. A helical membrane pass occupies residues 209–230; it reads FSWLSLKTLLSLALVGACITLG.

It belongs to the Bcl-2 family. As to quaternary structure, forms homodimers, and heterodimers with BAX, BAD, BAK and Bcl-X(L). Heterodimerization with BAX requires intact BH1 and BH2 motifs, and is necessary for anti-apoptotic activity. Component of the complex, at least composed of LRPPRC, BECN1 and BCL2; the interactions prevent BECN1 from forming an autophagy-inducing complex with PIK3C3. Interacts with EI24. Also interacts with APAF1, BBC3, BCL2L1, BNIPL, MRPL41 and TP53BP2. Binding to FKBP8 seems to target BCL2 to the mitochondria and probably interferes with the binding of BCL2 to its targets. Interacts with BAG1 in an ATP-dependent manner. Interacts with RAF1 (the 'Ser-338' and 'Ser-339' phosphorylated form). Interacts (via the BH4 domain) with EGLN3; the interaction prevents the formation of the BAX-BCL2 complex and inhibits the anti-apoptotic activity of BCL2. Interacts with G0S2; this interaction also prevents the formation of the anti-apoptotic BAX-BCL2 complex. Interacts with RTL10/BOP. Interacts with the SCF(FBXO10) complex. Interacts (via the loop between motifs BH4 and BH3) with NLRP1 (via LRR repeats), but not with NLRP2, NLRP3, NLRP4, PYCARD, nor MEFV. Interacts with GIMAP3/IAN4, GIMAP4/IAN1 and GIMAP5/IAN5. Interacts with BCAP31. Interacts with IRF3; the interaction is inhibited by Sendai virus infection. Interacts with BECN1; thereby inhibiting autophagy in non-starvation conditions. Interacts with AMBRA1; thereby inhibiting autophagy. In terms of processing, phosphorylation/dephosphorylation on Ser-70 regulates anti-apoptotic activity. Growth factor-stimulated phosphorylation on Ser-70 by PKC is required for the anti-apoptosis activity and occurs during the G2/M phase of the cell cycle. In the absence of growth factors, BCL2 appears to be phosphorylated by other protein kinases such as ERKs and stress-activated kinases. Phosphorylated by MAPK8/JNK1 at Thr-69, Ser-70 and Ser-84, which stimulates starvation-induced autophagy. Dephosphorylated by protein phosphatase 2A (PP2A). Proteolytically cleaved by caspases during apoptosis. The cleaved protein, lacking the BH4 motif, has pro-apoptotic activity, causes the release of cytochrome c into the cytosol promoting further caspase activity. Post-translationally, monoubiquitinated by PRKN, leading to an increase in its stability. Ubiquitinated by SCF(FBXO10), leading to its degradation by the proteasome.

Its subcellular location is the mitochondrion outer membrane. The protein resides in the nucleus membrane. It is found in the endoplasmic reticulum membrane. The protein localises to the cytoplasm. Functionally, suppresses apoptosis in a variety of cell systems including factor-dependent lymphohematopoietic and neural cells. Regulates cell death by controlling the mitochondrial membrane permeability. Appears to function in a feedback loop system with caspases. Inhibits caspase activity either by preventing the release of cytochrome c from the mitochondria and/or by binding to the apoptosis-activating factor (APAF-1). Also acts as an inhibitor of autophagy: interacts with BECN1 and AMBRA1 during non-starvation conditions and inhibits their autophagy function. May attenuate inflammation by impairing NLRP1-inflammasome activation, hence CASP1 activation and IL1B release. The sequence is that of Apoptosis regulator Bcl-2 (BCL2) from Cricetulus griseus (Chinese hamster).